We begin with the raw amino-acid sequence, 582 residues long: GDP-Man:Man(3)GlcNAc(2)-PP-Dol alpha-1,2-mannosyltransferase (582 aa).

Topologically, residues 1 to 12 (MESCWLTMESYQ) are lumenal. The chain crosses the membrane as a helical span at residues 13–33 (AALVVCIVSGLILAVAGYGNV). The Cytoplasmic portion of the chain corresponds to 34–240 (RRLACEFLLK…CCPPDVWCDT (207 aa)). An intramembrane region (helical) is located at residues 241–261 (MGYPFGYPFVSWLCRIPIITY). At 262–461 (THYPVVSIDM…EHFGIAVVEY (200 aa)) the chain is on the cytoplasmic side. An intramembrane region (helical) is located at residues 462-482 (AASGLITLAHASAGPLLDIIV). Topologically, residues 483–582 (PWDIEGDKQL…LHTLRNDKVE (100 aa)) are cytoplasmic.

Belongs to the glycosyltransferase group 1 family.

It is found in the endoplasmic reticulum membrane. It carries out the reaction an alpha-D-Man-(1-&gt;3)-[alpha-D-Man-(1-&gt;6)]-beta-D-Man-(1-&gt;4)-beta-D-GlcNAc-(1-&gt;4)-alpha-D-GlcNAc-diphospho-di-trans,poly-cis-dolichol + 2 GDP-alpha-D-mannose = an alpha-D-Man-(1-&gt;2)-alpha-D-Man-(1-&gt;2)-alpha-D-Man-(1-&gt;3)-[alpha-D-Man-(1-&gt;6)]-beta-D-Man-(1-&gt;4)-beta-D-GlcNAc-(1-&gt;4)-alpha-D-GlcNAc-diphospho-di-trans,poly-cis-dolichol + 2 GDP + 2 H(+). It participates in protein modification; protein glycosylation. Its function is as follows. GDP-Man:Man(3)GlcNAc(2)-PP-Dol alpha-1,2-mannosyltransferase that operates in the biosynthetic pathway of dolichol-linked oligosaccharides, the glycan precursors employed in protein asparagine (N)-glycosylation. The assembly of dolichol-linked oligosaccharides begins on the cytosolic side of the endoplasmic reticulum membrane and finishes in its lumen. The sequential addition of sugars to dolichol pyrophosphate produces dolichol-linked oligosaccharides containing fourteen sugars, including two GlcNAcs, nine mannoses and three glucoses. Once assembled, the oligosaccharide is transferred from the lipid to nascent proteins by oligosaccharyltransferases. Catalyzes, on the cytoplasmic face of the endoplasmic reticulum, the addition of the fourth and fifth mannose residues to the dolichol-linked oligosaccharide chain, to produce Man(5)GlcNAc(2)-PP-dolichol core oligosaccharide. The polypeptide is GDP-Man:Man(3)GlcNAc(2)-PP-Dol alpha-1,2-mannosyltransferase (ALG11) (Eremothecium gossypii (strain ATCC 10895 / CBS 109.51 / FGSC 9923 / NRRL Y-1056) (Yeast)).